We begin with the raw amino-acid sequence, 243 residues long: uncharacterized protein (243 aa).

Residues 1–16 form the signal peptide; sequence MKHFIILFLLLFVTAG. The N-palmitoyl cysteine moiety is linked to residue C17. C17 is lipidated: S-diacylglycerol cysteine.

The protein resides in the cell membrane. This is an uncharacterized protein from Bacillus subtilis (strain 168).